Consider the following 259-residue polypeptide: Proteasome subunit alpha (259 aa).

The protein belongs to the peptidase T1A family. As to quaternary structure, the 20S proteasome core is composed of 14 alpha and 14 beta subunits that assemble into four stacked heptameric rings, resulting in a barrel-shaped structure. The two inner rings, each composed of seven catalytic beta subunits, are sandwiched by two outer rings, each composed of seven alpha subunits. The catalytic chamber with the active sites is on the inside of the barrel. Has a gated structure, the ends of the cylinder being occluded by the N-termini of the alpha-subunits. Is capped at one or both ends by the proteasome regulatory ATPase, PAN.

It is found in the cytoplasm. With respect to regulation, the formation of the proteasomal ATPase PAN-20S proteasome complex, via the docking of the C-termini of PAN into the intersubunit pockets in the alpha-rings, triggers opening of the gate for substrate entry. Interconversion between the open-gate and close-gate conformations leads to a dynamic regulation of the 20S proteasome proteolysis activity. In terms of biological role, component of the proteasome core, a large protease complex with broad specificity involved in protein degradation. The sequence is that of Proteasome subunit alpha from Methanococcus maripaludis (strain C6 / ATCC BAA-1332).